The sequence spans 308 residues: Limonin dehydrogenase (308 aa).

This sequence belongs to the aldehyde dehydrogenase family.

The protein localises to the periplasm. Completely inhibited by HgCl(2), CoCl(2) and CaCl(2). In terms of biological role, catalyzes the NAD(+)-dependent conversion of limonin. The sequence is that of Limonin dehydrogenase from Pseudomonas putida (Arthrobacter siderocapsulatus).